Reading from the N-terminus, the 265-residue chain is Undecaprenyl-diphosphatase (265 aa).

Helical transmembrane passes span Met-1–Ile-21, Gln-39–Tyr-59, Leu-83–Gly-103, Ala-114–Phe-134, Leu-144–Thr-164, Ser-188–Ile-208, Met-218–Ile-238, and Val-244–Leu-264.

It belongs to the UppP family.

Its subcellular location is the cell inner membrane. It catalyses the reaction di-trans,octa-cis-undecaprenyl diphosphate + H2O = di-trans,octa-cis-undecaprenyl phosphate + phosphate + H(+). In terms of biological role, catalyzes the dephosphorylation of undecaprenyl diphosphate (UPP). Confers resistance to bacitracin. This chain is Undecaprenyl-diphosphatase, found in Alcanivorax borkumensis (strain ATCC 700651 / DSM 11573 / NCIMB 13689 / SK2).